The sequence spans 186 residues: MAMTAASVFGSGGCLELLTSSKAMRGKLWTRLAPFISKRHASTSQTSLSSSSSSCSVINPWLFVGLGNPGEKYQCTRHNVGFDMIDMFAQSQGISLTRHPFKALFGEGMVEGVPVLLAKPQTYMNLSGESVGPLAAYYKLPLNRVLVAFDDMDLPCGVLRLQPKGGYGRHNGSVDFIIMCFNEVIC.

The transit peptide at Met1–Ser49 directs the protein to the chloroplast. Tyr73 serves as a coordination point for tRNA. The active-site Proton acceptor is His78. Tyr123, Asn125, and Asn171 together coordinate tRNA.

It belongs to the PTH family.

It localises to the plastid. The protein resides in the chloroplast. The protein is CRS2-like protein, chloroplastic of Oryza sativa subsp. japonica (Rice).